Reading from the N-terminus, the 252-residue chain is GTP cyclohydrolase 1 type 2 homolog (252 aa).

His65, His66, Asp103, His220, and Glu224 together coordinate a divalent metal cation.

Belongs to the GTP cyclohydrolase I type 2/NIF3 family. Homohexamer.

This Pseudomonas aeruginosa (strain ATCC 15692 / DSM 22644 / CIP 104116 / JCM 14847 / LMG 12228 / 1C / PRS 101 / PAO1) protein is GTP cyclohydrolase 1 type 2 homolog.